The chain runs to 324 residues: Type II restriction enzyme AplI (324 aa).

The protein belongs to the BsuBI/PstI type II restriction endonuclease family. It depends on Mg(2+) as a cofactor.

The enzyme catalyses Endonucleolytic cleavage of DNA to give specific double-stranded fragments with terminal 5'-phosphates.. Its activity is regulated as follows. Activated by K(+) and Na(+) ions, whereas NH(4)(+) ions appear to inhibit endonuclease activity. Its function is as follows. A P subtype restriction enzyme that recognizes the double-stranded sequence 5'-CTGCAG-3' and cleaves after A-5. In Arthrospira platensis (strain NIES-39 / UTEX 3086 / IAM M-135) (Spirulina platensis), this protein is Type II restriction enzyme AplI (aplIR).